We begin with the raw amino-acid sequence, 73 residues long: Hypotensin-like peptide (73 aa).

The signal sequence occupies residues 1 to 25; it reads MKMMIAIVFVSILLLMFSLSSTAMG.

Expressed by the venom gland.

It localises to the secreted. May potentiate the hypotensive effect of bradykinin. This Tityus serrulatus (Brazilian scorpion) protein is Hypotensin-like peptide.